Reading from the N-terminus, the 119-residue chain is Beta-2-microglobulin (119 aa).

The first 20 residues, 1 to 20 (MARFVVAALLVLLCLSGLEA), serve as a signal peptide directing secretion. The Ig-like C1-type domain maps to 25 to 114 (PKIQVYSRHP…VTFPTPKTVK (90 aa)). Residues Cys-45 and Cys-100 are joined by a disulfide bond.

This sequence belongs to the beta-2-microglobulin family. As to quaternary structure, heterodimer of an alpha chain and a beta chain. Beta-2-microglobulin is the beta-chain of major histocompatibility complex class I molecules.

The protein resides in the secreted. Its function is as follows. Component of the class I major histocompatibility complex (MHC). Involved in the presentation of peptide antigens to the immune system. The chain is Beta-2-microglobulin (B2M) from Cebus albifrons (White-fronted capuchin).